Here is a 475-residue protein sequence, read N- to C-terminus: Ribulose bisphosphate carboxylase large chain (475 aa).

A propeptide spanning residues 1–2 (MS) is cleaved from the precursor. Residue Pro-3 is modified to N-acetylproline. Substrate-binding residues include Asn-123 and Thr-173. Lys-175 functions as the Proton acceptor in the catalytic mechanism. Lys-177 contributes to the substrate binding site. Lys-201, Asp-203, and Glu-204 together coordinate Mg(2+). The residue at position 201 (Lys-201) is an N6-carboxylysine. The active-site Proton acceptor is the His-294. The substrate site is built by Arg-295, His-327, and Ser-379.

This sequence belongs to the RuBisCO large chain family. Type I subfamily. As to quaternary structure, heterohexadecamer of 8 large chains and 8 small chains; disulfide-linked. The disulfide link is formed within the large subunit homodimers. It depends on Mg(2+) as a cofactor. Post-translationally, the disulfide bond which can form in the large chain dimeric partners within the hexadecamer appears to be associated with oxidative stress and protein turnover.

Its subcellular location is the plastid. It is found in the chloroplast. The catalysed reaction is 2 (2R)-3-phosphoglycerate + 2 H(+) = D-ribulose 1,5-bisphosphate + CO2 + H2O. It carries out the reaction D-ribulose 1,5-bisphosphate + O2 = 2-phosphoglycolate + (2R)-3-phosphoglycerate + 2 H(+). RuBisCO catalyzes two reactions: the carboxylation of D-ribulose 1,5-bisphosphate, the primary event in carbon dioxide fixation, as well as the oxidative fragmentation of the pentose substrate in the photorespiration process. Both reactions occur simultaneously and in competition at the same active site. The sequence is that of Ribulose bisphosphate carboxylase large chain from Welwitschia mirabilis (Tree tumbo).